A 499-amino-acid polypeptide reads, in one-letter code: Glutamyl-tRNA(Gln) amidotransferase subunit A, mitochondrial (499 aa).

Residues Lys-61 and Ser-139 each act as charge relay system in the active site. Catalysis depends on Ser-163, which acts as the Acyl-ester intermediate.

The protein belongs to the amidase family. GatA subfamily. In terms of assembly, subunit of the heterotrimeric GatCAB amidotransferase (AdT) complex, composed of A, B and C subunits.

The protein localises to the mitochondrion. The catalysed reaction is L-glutamyl-tRNA(Gln) + L-glutamine + ATP + H2O = L-glutaminyl-tRNA(Gln) + L-glutamate + ADP + phosphate + H(+). In terms of biological role, allows the formation of correctly charged Gln-tRNA(Gln) through the transamidation of misacylated Glu-tRNA(Gln) in the mitochondria. The reaction takes place in the presence of glutamine and ATP through an activated gamma-phospho-Glu-tRNA(Gln). The polypeptide is Glutamyl-tRNA(Gln) amidotransferase subunit A, mitochondrial (Coccidioides posadasii (strain C735) (Valley fever fungus)).